Reading from the N-terminus, the 185-residue chain is Ribosome-recycling factor (185 aa).

The protein belongs to the RRF family.

The protein localises to the cytoplasm. Functionally, responsible for the release of ribosomes from messenger RNA at the termination of protein biosynthesis. May increase the efficiency of translation by recycling ribosomes from one round of translation to another. The chain is Ribosome-recycling factor from Clostridium acetobutylicum (strain ATCC 824 / DSM 792 / JCM 1419 / IAM 19013 / LMG 5710 / NBRC 13948 / NRRL B-527 / VKM B-1787 / 2291 / W).